Reading from the N-terminus, the 436-residue chain is MEKQILVPSPTDELVNRALEVKSASVSLSQCSNDQRQSALILMTEALSLRSSEILKANSDDVHRAEQEGLNQALLSRLKLTEEKLRISIEGIRQVASLSDPIGIRQLHRELNTNLYLQRVTVPLGVIGVIFESRPDAVMQIASLAIRSGNGAILKGGSEASLTNIEIVKAMKEGLSKSDIQPESICLLKTRQESLGLLGLDGIVDLIIPRGSNELVRFIQDNTRIPVLGHADGICHLYIDSAVNLNQALDIAIDSKCQYPAACNAIETLLLHKDIAASFLKLAIPAFEKLGVTLLGDELSQSFGIITKAEESDWSTEYLDLKLSVKVVSSVDEAMLHIRRYGSRHTDAIATTNKEIARRFLRTVDSSGVYHNCSTRFADGFRYGFGAEVGISTQTLPPRGPVGLDGLVTYRYFLEGDGHIAEDFSNGKKTFSHIDL.

Belongs to the gamma-glutamyl phosphate reductase family.

Its subcellular location is the cytoplasm. The catalysed reaction is L-glutamate 5-semialdehyde + phosphate + NADP(+) = L-glutamyl 5-phosphate + NADPH + H(+). Its pathway is amino-acid biosynthesis; L-proline biosynthesis; L-glutamate 5-semialdehyde from L-glutamate: step 2/2. Its function is as follows. Catalyzes the NADPH-dependent reduction of L-glutamate 5-phosphate into L-glutamate 5-semialdehyde and phosphate. The product spontaneously undergoes cyclization to form 1-pyrroline-5-carboxylate. The sequence is that of Gamma-glutamyl phosphate reductase from Prochlorococcus marinus (strain SARG / CCMP1375 / SS120).